Here is a 328-residue protein sequence, read N- to C-terminus: Malate dehydrogenase (328 aa).

13–19 (GAAGQIS) is an NAD(+) binding site. Residues arginine 94 and arginine 100 each contribute to the substrate site. Residues asparagine 107, glutamine 114, and 131 to 133 (VGN) contribute to the NAD(+) site. Residues asparagine 133 and arginine 164 each contribute to the substrate site. The Proton acceptor role is filled by histidine 189.

It belongs to the LDH/MDH superfamily. MDH type 2 family.

The catalysed reaction is (S)-malate + NAD(+) = oxaloacetate + NADH + H(+). Its function is as follows. Catalyzes the reversible oxidation of malate to oxaloacetate. The polypeptide is Malate dehydrogenase (Alcanivorax borkumensis (strain ATCC 700651 / DSM 11573 / NCIMB 13689 / SK2)).